An 867-amino-acid chain; its full sequence is Ataxin-7 (867 aa).

The segment covering 1-15 (MSERAADDVRGEPRR) has biased composition (basic and acidic residues). The tract at residues 1-59 (MSERAADDVRGEPRRAAGGAAAARQQQQQPQPLQPQRQHPPLRRPRAEDGGTGDTTTSA) is disordered. Over residues 16-39 (AAGGAAAARQQQQQPQPLQPQRQH) the composition is skewed to low complexity. The residue at position 222 (K222) is an N6-acetyllysine. K243 participates in a covalent cross-link: Glycyl lysine isopeptide (Lys-Gly) (interchain with G-Cter in SUMO); alternate. Residue K243 forms a Glycyl lysine isopeptide (Lys-Gly) (interchain with G-Cter in SUMO2); alternate linkage. The SCA7 domain maps to 320–387 (KRLSEREFDP…KAREKELIRH (68 aa)). Basic and acidic residues predominate over residues 379 to 400 (AREKELIRHDSQQVPHPLRDPH). Disordered regions lie at residues 379 to 483 (AREK…EESV), 600 to 711 (HGTT…SHSV), and 845 to 867 (TGNISGAQGLTNNSLLHQPKARP). Pro residues-rich tracts occupy residues 426–437 (PQTPSLPRPPGC) and 447–462 (IDPPPGQESPHPPLPA). Over residues 472 to 481 (EEGEGDDREE) the composition is skewed to acidic residues. A compositionally biased stretch (low complexity) spans 619 to 647 (SVQSRQVSASSSPPSTPSGLSSVPSSPLS). The span at 649–659 (KPQKWKPSKSI) shows a compositional bias: basic residues. The span at 665 to 674 (SALSTNCHNA) shows a compositional bias: polar residues. The span at 689-711 (SSPLLVPSSSSSSSSSSSSSHSV) shows a compositional bias: low complexity. Residues 846–860 (GNISGAQGLTNNSLL) are compositionally biased toward polar residues.

Belongs to the ataxin-7 family. Component of the SAGA transcription coactivator-HAT complex, at least composed of SUPT3H, GCN5L2, TAF5L, TAF6L, SUPT7L, TADA3L, TAD1L, TAF10, TAF12, TRRAP, TAF9 and ATXN7. The STAGA core complex is associated with a subcomplex required for histone deubiquitination composed of ATXN7L3, ENY2 and USP22. Interacts with SORBS1, PSMC1 and CRX. Interacts with TRRAP, GCN5L2 and TAF10. Interacts with alpha tubulin. Proteolytically cleaved by caspase-7 (CASP7). In terms of processing, sumoylation has no effect on subcellular location or interaction with components of the STAGA complex. In terms of tissue distribution, widely expressed in adult tissues, with the highest expression in heart, brain, liver and kidney.

It localises to the nucleus. It is found in the nucleolus. The protein resides in the nucleus matrix. Its subcellular location is the cytoplasm. The protein localises to the cytoskeleton. Functionally, acts as a component of the SAGA (aka STAGA) transcription coactivator-HAT complex. Mediates the interaction of SAGA complex with the CRX and is involved in CRX-dependent gene activation. Probably involved in tethering the deubiquitination module within the SAGA complex. Necessary for microtubule cytoskeleton stabilization. Involved in neurodegeneration. The sequence is that of Ataxin-7 (Atxn7) from Mus musculus (Mouse).